Here is a 77-residue protein sequence, read N- to C-terminus: Large ribosomal subunit protein bL31 (77 aa).

It belongs to the bacterial ribosomal protein bL31 family. Type A subfamily. In terms of assembly, part of the 50S ribosomal subunit.

In terms of biological role, binds the 23S rRNA. The chain is Large ribosomal subunit protein bL31 from Paramagnetospirillum magneticum (strain ATCC 700264 / AMB-1) (Magnetospirillum magneticum).